We begin with the raw amino-acid sequence, 122 residues long: Small ribosomal subunit protein uS13 (122 aa).

Residues 95–122 form a disordered region; the sequence is NLPVRGQRTHTNARTRKGKAKPIAGKKK.

This sequence belongs to the universal ribosomal protein uS13 family. Part of the 30S ribosomal subunit. Forms a loose heterodimer with protein S19. Forms two bridges to the 50S subunit in the 70S ribosome.

In terms of biological role, located at the top of the head of the 30S subunit, it contacts several helices of the 16S rRNA. In the 70S ribosome it contacts the 23S rRNA (bridge B1a) and protein L5 of the 50S subunit (bridge B1b), connecting the 2 subunits; these bridges are implicated in subunit movement. Contacts the tRNAs in the A and P-sites. This is Small ribosomal subunit protein uS13 from Methylobacterium nodulans (strain LMG 21967 / CNCM I-2342 / ORS 2060).